Here is a 65-residue protein sequence, read N- to C-terminus: uncharacterized protein (65 aa).

This is an uncharacterized protein from Acidianus filamentous virus 1 (isolate United States/Yellowstone) (AFV-1).